Consider the following 132-residue polypeptide: Small ribosomal subunit protein uS9 (132 aa).

The protein belongs to the universal ribosomal protein uS9 family.

This Blochmanniella pennsylvanica (strain BPEN) protein is Small ribosomal subunit protein uS9.